The sequence spans 178 residues: Large ribosomal subunit protein uL6 (178 aa).

This sequence belongs to the universal ribosomal protein uL6 family. Part of the 50S ribosomal subunit.

This protein binds to the 23S rRNA, and is important in its secondary structure. It is located near the subunit interface in the base of the L7/L12 stalk, and near the tRNA binding site of the peptidyltransferase center. This Nitrosococcus oceani (strain ATCC 19707 / BCRC 17464 / JCM 30415 / NCIMB 11848 / C-107) protein is Large ribosomal subunit protein uL6.